The following is a 150-amino-acid chain: D-aminoacyl-tRNA deacylase (150 aa).

The Gly-cisPro motif, important for rejection of L-amino acids signature appears at 137 to 138 (GP).

This sequence belongs to the DTD family. In terms of assembly, homodimer.

Its subcellular location is the cytoplasm. It carries out the reaction glycyl-tRNA(Ala) + H2O = tRNA(Ala) + glycine + H(+). It catalyses the reaction a D-aminoacyl-tRNA + H2O = a tRNA + a D-alpha-amino acid + H(+). An aminoacyl-tRNA editing enzyme that deacylates mischarged D-aminoacyl-tRNAs. Also deacylates mischarged glycyl-tRNA(Ala), protecting cells against glycine mischarging by AlaRS. Acts via tRNA-based rather than protein-based catalysis; rejects L-amino acids rather than detecting D-amino acids in the active site. By recycling D-aminoacyl-tRNA to D-amino acids and free tRNA molecules, this enzyme counteracts the toxicity associated with the formation of D-aminoacyl-tRNA entities in vivo and helps enforce protein L-homochirality. The protein is D-aminoacyl-tRNA deacylase of Heliobacterium modesticaldum (strain ATCC 51547 / Ice1).